The sequence spans 445 residues: Exodeoxyribonuclease 7 large subunit (445 aa).

This sequence belongs to the XseA family. Heterooligomer composed of large and small subunits.

Its subcellular location is the cytoplasm. It catalyses the reaction Exonucleolytic cleavage in either 5'- to 3'- or 3'- to 5'-direction to yield nucleoside 5'-phosphates.. Its function is as follows. Bidirectionally degrades single-stranded DNA into large acid-insoluble oligonucleotides, which are then degraded further into small acid-soluble oligonucleotides. In Geotalea daltonii (strain DSM 22248 / JCM 15807 / FRC-32) (Geobacter daltonii), this protein is Exodeoxyribonuclease 7 large subunit.